The primary structure comprises 707 residues: DNA ligase (707 aa).

Residues 48–52, 97–98, and E134 contribute to the NAD(+) site; these read DAEYD and SI. K136 functions as the N6-AMP-lysine intermediate in the catalytic mechanism. Positions 157, 193, 320, and 344 each coordinate NAD(+). Zn(2+) contacts are provided by C438, C441, C456, and C462. The BRCT domain occupies 621-707; that stretch reads VAPKPLSGKT…DSPPDERIPA (87 aa).

The protein belongs to the NAD-dependent DNA ligase family. LigA subfamily. Requires Mg(2+) as cofactor. It depends on Mn(2+) as a cofactor.

The catalysed reaction is NAD(+) + (deoxyribonucleotide)n-3'-hydroxyl + 5'-phospho-(deoxyribonucleotide)m = (deoxyribonucleotide)n+m + AMP + beta-nicotinamide D-nucleotide.. DNA ligase that catalyzes the formation of phosphodiester linkages between 5'-phosphoryl and 3'-hydroxyl groups in double-stranded DNA using NAD as a coenzyme and as the energy source for the reaction. It is essential for DNA replication and repair of damaged DNA. The chain is DNA ligase from Polaromonas naphthalenivorans (strain CJ2).